The following is a 531-amino-acid chain: Fatty acid--[acyl-carrier-protein] ligase MmaC (531 aa).

T169 provides a ligand contact to Mg(2+). I218, V308, and S312 together coordinate ATP. E313 serves as a coordination point for Mg(2+). Residue D403 participates in ATP binding.

Belongs to the ATP-dependent AMP-binding enzyme family. The cofactor is Mg(2+).

It catalyses the reaction a (2E)-enoyl fatty acid + holo-[ACP] + ATP = a (2E)-enoyl-[ACP] + AMP + diphosphate. The catalysed reaction is a (2E)-enoyl fatty acid + ATP + H(+) = a (2E)-2-fatty-enoyl-AMP + diphosphate. The enzyme catalyses a (2E)-2-fatty-enoyl-AMP + holo-[ACP] = a (2E)-enoyl-[ACP] + AMP + H(+). It carries out the reaction (2E)-decenoate + holo-[ACP] + ATP = (2E)-decenoyl-[ACP] + AMP + diphosphate. It catalyses the reaction a (3R)-3-isocyanyl-fatty acid + holo-[ACP] + ATP = a (3R)-3-isocyanyl-fatty acyl-[ACP] + AMP + diphosphate. The catalysed reaction is a (3R)-3-isocyanyl-fatty acid + ATP + H(+) = a (3R)-3-isocyanyl-fatty acyl-AMP + diphosphate. The enzyme catalyses a (3R)-3-isocyanyl-fatty acyl-AMP + holo-[ACP] = a (3R)-3-isocyanyl-fatty acyl-[ACP] + AMP + H(+). Acyl:acyl-carrier protein ligase involved in the biosynthesis of a unique class of isonitrile lipopeptides (INLPs) that seem to play a role in metal acquisition in M.marinum. Acts twice during the INLP pathway, catalyzing the activation of (2E)-2-decenoate as well as probably the corresponding (3R)-3-isocyanyl-fatty acid as acyl-adenylates (acyl-AMP), and then the acyl transfer to the dedicated acyl-carrier protein MmaB. The chain is Fatty acid--[acyl-carrier-protein] ligase MmaC from Mycobacterium marinum (strain ATCC BAA-535 / M).